Reading from the N-terminus, the 261-residue chain is uncharacterized protein (261 aa).

The first 22 residues, 1–22, serve as a signal peptide directing secretion; the sequence is MRDSKRVVLYISIMVLSIFIIG. The N-palmitoyl cysteine moiety is linked to residue Cys23. Cys23 carries S-diacylglycerol cysteine lipidation.

The protein belongs to the staphylococcal tandem lipoprotein family.

Its subcellular location is the cell membrane. This is an uncharacterized protein from Staphylococcus aureus (strain N315).